The chain runs to 601 residues: Elongation factor 4 (601 aa).

One can recognise a tr-type G domain in the interval 6–188 (KFTRNFSIIA…AICYLLPPPV (183 aa)). GTP is bound by residues 18–23 (DHGKST) and 135–138 (NKID).

Belongs to the TRAFAC class translation factor GTPase superfamily. Classic translation factor GTPase family. LepA subfamily.

The protein localises to the cell inner membrane. It catalyses the reaction GTP + H2O = GDP + phosphate + H(+). Functionally, required for accurate and efficient protein synthesis under certain stress conditions. May act as a fidelity factor of the translation reaction, by catalyzing a one-codon backward translocation of tRNAs on improperly translocated ribosomes. Back-translocation proceeds from a post-translocation (POST) complex to a pre-translocation (PRE) complex, thus giving elongation factor G a second chance to translocate the tRNAs correctly. Binds to ribosomes in a GTP-dependent manner. The chain is Elongation factor 4 from Leptospira biflexa serovar Patoc (strain Patoc 1 / Ames).